Reading from the N-terminus, the 389-residue chain is Zip homologous protein 3 (389 aa).

Residues 6-43 (CNKCFNRKPPDGFFISSCFHIFCTKCAKADLAVCLICK) form an RING-type zinc finger. The stretch at 123–164 (LAEATAWIQMAEKKLQASEEERVKAEREIEECQAKLKSMTNL) forms a coiled coil. A disordered region spans residues 366 to 389 (ISSQPGYLAQRKPINGRSFIGPAD).

Interacts with zhp-4; the interaction is required for their localization along paired chromosomes and stability, and for the formation of chiasma during meiotic recombination. In terms of tissue distribution, expressed througout the gonad (at protein level). Expressed in the germline.

It is found in the chromosome. Recruited co-dependently with zhp-4 to the synaptonemal complex between homologous chromosome pairs to regulate the formation and number of crossover events between homologs during meiotic recombination. In the early stages of pachytene, in complex with zhp-4, recruited by the zhp-1-zhp-2 heterodimer to designated crossover sites along the homolog pair to stabilize other pro-crossover factors such as rmh-1, msh-5 and cosa-1. This in turn facilitates crossover and promotes the formation of chiasma in each meiotic nucleus at the late pachytene stage of meiosis. Plays a role in the segregation of homologous chromosomes following the completion of crossovers. Together with him-14 and msh-5 plays a role in the activation of DNA damage-dependent apoptosis at the DNA damage checkpoint in pachytene cells. This is Zip homologous protein 3 from Caenorhabditis elegans.